The primary structure comprises 3061 residues: Genome polyprotein (3061 aa).

The Peptidase S30 domain maps to lysine 141–phenylalanine 284. Catalysis depends on for P1 proteinase activity residues histidine 192, aspartate 201, and serine 235. The Involved in interaction with stylet and aphid transmission motif lies at lysine 334–cysteine 337. The Involved in virions binding and aphid transmission signature appears at proline 592–lysine 594. Positions leucine 618–glycine 740 constitute a Peptidase C6 domain. Active-site for helper component proteinase activity residues include cysteine 626 and histidine 699. The Helicase ATP-binding domain maps to aspartate 1229–glutamate 1381. Glycine 1242 to serine 1249 is an ATP binding site. The DECH box motif lies at aspartate 1331–histidine 1334. Residues aspartate 1400–serine 1559 form the Helicase C-terminal domain. The Nuclear localization signal motif lies at arginine 1884–threonine 1892. Tyrosine 1907 carries the O-(5'-phospho-RNA)-tyrosine modification. The region spanning alanine 2032–glutamate 2250 is the Peptidase C4 domain. Catalysis depends on for nuclear inclusion protein A activity residues histidine 2077, aspartate 2112, and cysteine 2182. A RdRp catalytic domain is found at tryptophan 2517–leucine 2641. The interval glycine 2795–threonine 2835 is disordered. Threonine 3044 carries the phosphothreonine modification.

It belongs to the potyviridae genome polyprotein family. Interacts with host eIF4E protein (via cap-binding region); this interaction mediates the translation of the VPg-viral RNA conjugates. Part of a complex that comprises VPg, RNA, host EIF4E and EIF4G; this interaction mediates the translation of the VPg-viral RNA conjugates. Post-translationally, VPg is uridylylated by the polymerase and is covalently attached to the 5'-end of the genomic RNA. This uridylylated form acts as a nucleotide-peptide primer for the polymerase. In terms of processing, potyviral RNA is expressed as two polyproteins which undergo post-translational proteolytic processing. Genome polyprotein is processed by NIa-pro, P1 and HC-pro proteinases resulting in the production of at least ten individual proteins. P3N-PIPO polyprotein is cleaved by P1 and HC-pro proteinases resulting in the production of three individual proteins. The P1 proteinase and the HC-pro cleave only their respective C-termini autocatalytically. 6K1 is essential for proper proteolytic separation of P3 from CI.

It is found in the host cytoplasmic vesicle. Its subcellular location is the host nucleus. It localises to the virion. The enzyme catalyses RNA(n) + a ribonucleoside 5'-triphosphate = RNA(n+1) + diphosphate. It catalyses the reaction Hydrolyzes glutaminyl bonds, and activity is further restricted by preferences for the amino acids in P6 - P1' that vary with the species of potyvirus, e.g. Glu-Xaa-Xaa-Tyr-Xaa-Gln-|-(Ser or Gly) for the enzyme from tobacco etch virus. The natural substrate is the viral polyprotein, but other proteins and oligopeptides containing the appropriate consensus sequence are also cleaved.. It carries out the reaction Hydrolyzes a Gly-|-Gly bond at its own C-terminus, commonly in the sequence -Tyr-Xaa-Val-Gly-|-Gly, in the processing of the potyviral polyprotein.. In terms of biological role, required for aphid transmission and also has proteolytic activity. Only cleaves a Gly-Gly dipeptide at its own C-terminus. Interacts with virions and aphid stylets. Acts as a suppressor of RNA-mediated gene silencing, also known as post-transcriptional gene silencing (PTGS), a mechanism of plant viral defense that limits the accumulation of viral RNAs. May have RNA-binding activity. Its function is as follows. Has helicase activity. It may be involved in replication. Indispensable for virus replication. Reduces the abundance of host transcripts related to jasmonic acid biosynthesis therefore altering the host defenses. In order to increase its own stability, decreases host protein degradation pathways. Functionally, indispensable for virus replication. In terms of biological role, mediates the cap-independent, EIF4E-dependent translation of viral genomic RNAs. Binds to the cap-binding site of host EIF4E and thus interferes with the host EIF4E-dependent mRNA export and translation. VPg-RNA directly binds EIF4E and is a template for transcription. Also forms trimeric complexes with EIF4E-EIF4G, which are templates for translation. Its function is as follows. Has RNA-binding and proteolytic activities. An RNA-dependent RNA polymerase that plays an essential role in the virus replication. Functionally, involved in aphid transmission, cell-to-cell and systemis movement, encapsidation of the viral RNA and in the regulation of viral RNA amplification. In Potato virus Y (strain Hungarian) (PVY), this protein is Genome polyprotein.